A 348-amino-acid polypeptide reads, in one-letter code: Glucose 1-dehydrogenase 2 (348 aa).

C39 serves as a coordination point for Zn(2+). Residue T41 participates in substrate binding. H64 and E65 together coordinate Zn(2+). Substrate-binding residues include E110 and E146. E146 contributes to the Zn(2+) binding site. Residues 178–181 (AGPV), 260–262 (LGV), and 289–291 (SVN) contribute to the NADP(+) site. N291 is a binding site for substrate.

Belongs to the zinc-containing alcohol dehydrogenase family. Glucose 1-dehydrogenase subfamily. The cofactor is Zn(2+).

It carries out the reaction D-glucose + NAD(+) = D-glucono-1,5-lactone + NADH + H(+). The enzyme catalyses D-glucose + NADP(+) = D-glucono-1,5-lactone + NADPH + H(+). Its function is as follows. Catalyzes the NAD(P)(+)-dependent oxidation of D-glucose to D-gluconate via gluconolactone. Can utilize both NAD(+) and NADP(+) as electron acceptor. Is involved in the degradation of glucose through a non-phosphorylative variant of the Entner-Doudoroff pathway. The sequence is that of Glucose 1-dehydrogenase 2 from Vulcanisaeta moutnovskia (strain 768-28).